A 165-amino-acid polypeptide reads, in one-letter code: Free methionine-R-sulfoxide reductase (165 aa).

The 101-residue stretch at 49–149 folds into the GAF domain; sequence LLEDDTLVLG…LRQLVAQLEK (101 aa).

Belongs to the free Met sulfoxide reductase family.

It carries out the reaction [thioredoxin]-disulfide + L-methionine + H2O = L-methionine (R)-S-oxide + [thioredoxin]-dithiol. Its function is as follows. Catalyzes the reversible oxidation-reduction of the R-enantiomer of free methionine sulfoxide to methionine. Specific for free L-methionine-(R)-S-oxide. The polypeptide is Free methionine-R-sulfoxide reductase (msrC) (Escherichia coli (strain K12)).